The sequence spans 257 residues: MVSWMICRLVVLIFGMLYPAYASYKAVKSKNIREYVRWMMYWIVFAIFMAAETFTDIFISWFPFYYEIKMAFVLWLLSPYTKGASLLYRKFVHPSLSRHEKEIDACIVQAKERSYETMLSFGKRSLNMAASAAVQAATKSQGALAGRLRSFSMQDLRSIPDTSAPTYQDPLYLEDQAPRRRPPIGYRPGGLQDSDTEDECWSDNEIAPQPPVRPREKPLSRSQSLRVVKRKPLVREGTSRSLKVRTRKKTIPSDLDS.

The next 2 membrane-spanning stretches (helical) occupy residues 1 to 21 (MVSW…YPAY) and 42 to 62 (WIVF…ISWF). Residues Ser152 and Ser194 each carry the phosphoserine modification. Residues 159–257 (IPDTSAPTYQ…KKTIPSDLDS (99 aa)) are disordered. The residue at position 196 (Thr196) is a Phosphothreonine. Ser202 carries the phosphoserine modification. Thr250 carries the post-translational modification Phosphothreonine. Ser253 carries the post-translational modification Phosphoserine.

This sequence belongs to the DP1 family.

Its subcellular location is the endoplasmic reticulum membrane. Microtubule-binding protein required to ensure proper cell division and nuclear envelope reassembly by sequestering the endoplasmic reticulum away from chromosomes during mitosis. Probably acts by clearing the endoplasmic reticulum membrane from metaphase chromosomes. This Rattus norvegicus (Rat) protein is Receptor expression-enhancing protein 4 (Reep4).